The following is a 261-amino-acid chain: Potassium/proton antiporter CemA (261 aa).

2 helical membrane passes run 47–67 (FLVF…GPWV) and 138–158 (IISH…YFIM).

The protein belongs to the CemA family.

The protein resides in the plastid. It is found in the chloroplast inner membrane. The catalysed reaction is K(+)(in) + H(+)(out) = K(+)(out) + H(+)(in). In terms of biological role, contributes to K(+)/H(+) antiport activity by supporting proton efflux to control proton extrusion and homeostasis in chloroplasts in a light-dependent manner to modulate photosynthesis. Prevents excessive induction of non-photochemical quenching (NPQ) under continuous-light conditions. Indirectly promotes efficient inorganic carbon uptake into chloroplasts. In Ginkgo biloba (Ginkgo), this protein is Potassium/proton antiporter CemA.